The following is a 41-amino-acid chain: Large ribosomal subunit protein bL36B (41 aa).

The protein belongs to the bacterial ribosomal protein bL36 family.

The sequence is that of Large ribosomal subunit protein bL36B from Neisseria meningitidis serogroup B (strain ATCC BAA-335 / MC58).